The sequence spans 453 residues: Serine incorporator 1 (453 aa).

G2 is lipidated: N-myristoyl glycine. The Cytoplasmic portion of the chain corresponds to G2–R39. Residues L40 to G60 traverse the membrane as a helical segment. Topologically, residues M61–K88 are lumenal. The chain crosses the membrane as a helical span at residues A89–I109. Over K110–N123 the chain is Cytoplasmic. The chain crosses the membrane as a helical span at residues G124–P144. Residues E145 to V151 lie on the Lumenal side of the membrane. A helical membrane pass occupies residues W152–I172. Residues D173 to A197 lie on the Cytoplasmic side of the membrane. A helical membrane pass occupies residues L198 to V218. Residues Y219–A231 are Lumenal-facing. Residues F232–I252 traverse the membrane as a helical segment. Topologically, residues Q253–S259 are cytoplasmic. Residues G260–T280 form a helical membrane-spanning segment. At N281 to S309 the chain is on the lumenal side. The chain crosses the membrane as a helical span at residues V310–Y330. Residues S331–S387 lie on the Cytoplasmic side of the membrane. S351 is subject to Phosphoserine. T352 carries the phosphothreonine modification. S364 carries the phosphoserine modification. Residues F388–Y408 traverse the membrane as a helical segment. The Lumenal segment spans residues R409–K426. A helical membrane pass occupies residues I427–L447. Over T448–D453 the chain is Cytoplasmic.

Belongs to the TDE1 family. In terms of assembly, interacts with SPTLC1.

It is found in the endoplasmic reticulum membrane. Enhances the incorporation of serine into phosphatidylserine and sphingolipids. This chain is Serine incorporator 1 (SERINC1), found in Bos taurus (Bovine).